A 197-amino-acid chain; its full sequence is Inner membrane protein p54 (197 aa).

A helical transmembrane segment spans residues Tyr-32–Phe-52. A disordered region spans residues Pro-84 to Val-123. 4 consecutive repeat copies span residues Ala-139–Ser-142, Ala-143–Ser-146, Ala-147–Ser-150, and Ala-151–Ser-154. The tract at residues Ala-139–Ser-154 is 4 X 4 AA tandem repeats of A-A-A-S. Residues Tyr-163–Thr-175 form an interaction with host DYNLL1 region.

The protein belongs to the asfivirus envelope protein p54 family. As to quaternary structure, interacts with the host light chain cytoplasmic dynein DYNLL1; this interaction is critical for intracellular microtubule-dependent virus transport toward viral factories.

It is found in the virion membrane. The protein resides in the host cytoplasm. Its subcellular location is the host cytoskeleton. The protein localises to the host endoplasmic reticulum membrane. Functionally, inner envelope protein involved, through its interaction with host dynein, in the intracellular microtubule-dependent transport of viral capsid toward viral factories. Seems to induce caspase-3 activation and apoptosis. Plays a role in virion morphogenesis by recruiting and transforming the host ER membranes into the precursors of the viral envelope. Involved in virus attachment to the host cell. This African swine fever virus (isolate Tick/South Africa/Pretoriuskop Pr4/1996) (ASFV) protein is Inner membrane protein p54.